The following is a 509-amino-acid chain: Putative thymidine phosphorylase (509 aa).

The protein belongs to the thymidine/pyrimidine-nucleoside phosphorylase family. Type 2 subfamily.

It carries out the reaction thymidine + phosphate = 2-deoxy-alpha-D-ribose 1-phosphate + thymine. In Chelativorans sp. (strain BNC1), this protein is Putative thymidine phosphorylase.